The chain runs to 434 residues: Protein arginine N-methyltransferase 2 (434 aa).

Residues 155-198 (IQGEETTEEERKEEEPSNTSDIIDEQKVEQPKEDLKEDPSSNQE) form a disordered region. Residues 178 to 193 (DEQKVEQPKEDLKEDP) show a composition bias toward basic and acidic residues. Residues 193–434 (PSSNQETYLK…YHPEARFMDV (242 aa)) enclose the RMT2 domain. Residues Tyr-200, Met-230, 258 to 263 (FGMGII), 279 to 281 (EAH), 306 to 307 (WQ), and Asp-327 each bind S-adenosyl-L-methionine.

Belongs to the class I-like SAM-binding methyltransferase superfamily. RMT2 methyltransferase family. Monomer.

The protein localises to the cytoplasm. It is found in the nucleus. S-adenosyl-L-methionine-dependent protein-arginine N-methyltransferase that methylates the delta-nitrogen atom of arginine residues to form N5-methylarginine (type IV) in target proteins. Monomethylates ribosomal protein L12. In Debaryomyces hansenii (strain ATCC 36239 / CBS 767 / BCRC 21394 / JCM 1990 / NBRC 0083 / IGC 2968) (Yeast), this protein is Protein arginine N-methyltransferase 2.